The following is a 184-amino-acid chain: Flagellar transcriptional regulator FlhC (184 aa).

The Zn(2+) site is built by Cys-144, Cys-147, Cys-163, and Cys-166.

It belongs to the FlhC family. In terms of assembly, heterohexamer composed of two FlhC and four FlhD subunits. Each FlhC binds a FlhD dimer, forming a heterotrimer, and a hexamer assembles by dimerization of two heterotrimers. Zn(2+) is required as a cofactor.

It localises to the cytoplasm. Functionally, functions in complex with FlhD as a master transcriptional regulator that regulates transcription of several flagellar and non-flagellar operons by binding to their promoter region. Activates expression of class 2 flagellar genes, including fliA, which is a flagellum-specific sigma factor that turns on the class 3 genes. Also regulates genes whose products function in a variety of physiological pathways. The protein is Flagellar transcriptional regulator FlhC of Verminephrobacter eiseniae (strain EF01-2).